Consider the following 480-residue polypeptide: Ribulose bisphosphate carboxylase large chain (480 aa).

Positions 1-2 are excised as a propeptide; it reads MS. An N-acetylproline modification is found at Pro-3. The residue at position 14 (Lys-14) is an N6,N6,N6-trimethyllysine. Substrate-binding residues include Asn-123 and Thr-173. Lys-175 serves as the catalytic Proton acceptor. Lys-177 is a substrate binding site. Mg(2+)-binding residues include Lys-201, Asp-203, and Glu-204. An N6-carboxylysine modification is found at Lys-201. The Proton acceptor role is filled by His-294. Substrate contacts are provided by Arg-295, His-327, and Ser-379.

Belongs to the RuBisCO large chain family. Type I subfamily. In terms of assembly, heterohexadecamer of 8 large chains and 8 small chains; disulfide-linked. The disulfide link is formed within the large subunit homodimers. The cofactor is Mg(2+). In terms of processing, the disulfide bond which can form in the large chain dimeric partners within the hexadecamer appears to be associated with oxidative stress and protein turnover.

The protein localises to the plastid. It localises to the chloroplast. It carries out the reaction 2 (2R)-3-phosphoglycerate + 2 H(+) = D-ribulose 1,5-bisphosphate + CO2 + H2O. The catalysed reaction is D-ribulose 1,5-bisphosphate + O2 = 2-phosphoglycolate + (2R)-3-phosphoglycerate + 2 H(+). Its function is as follows. RuBisCO catalyzes two reactions: the carboxylation of D-ribulose 1,5-bisphosphate, the primary event in carbon dioxide fixation, as well as the oxidative fragmentation of the pentose substrate in the photorespiration process. Both reactions occur simultaneously and in competition at the same active site. In Basella alba (Malabar spinach), this protein is Ribulose bisphosphate carboxylase large chain.